The following is a 702-amino-acid chain: Solute carrier organic anion transporter family member 1B3 (702 aa).

Topologically, residues 1–28 (MDQHQHLNKTAESASSEKKKTRRCNGFK) are cytoplasmic. A helical transmembrane segment spans residues 29 to 48 (MFLAALSFSYIAKALGGIIM). Residues 49 to 67 (KISITQIERRFDISSSLAG) lie on the Extracellular side of the membrane. Residues 68-88 (LIDGSFEIGNLLVIVFVSYFG) traverse the membrane as a helical segment. The Cytoplasmic portion of the chain corresponds to 89–94 (SKLHRP). The helical transmembrane segment at 95 to 119 (KLIGIGCLLMGTGSILTSLPHFFMG) threads the bilayer. At 120 to 168 (YYRYSKETHINPSENSTSSLSTCLINQTLSFNGTSPEIVEKDCVKESGS) the chain is on the extracellular side. Residues Asn134, Asn145, and Asn151 are each glycosylated (N-linked (GlcNAc...) asparagine). A helical transmembrane segment spans residues 169-197 (HMWIYVFMGNMLRGIGETPIVPLGISYID). At 198–216 (DFAKEGHSSLYLGSLNAIG) the chain is on the cytoplasmic side. A helical transmembrane segment spans residues 217 to 237 (MIGPVIGFALGSLFAKMYVDI). The Extracellular segment spans residues 238–255 (GYVDLSTIRITPKDSRWV). A helical membrane pass occupies residues 256 to 280 (GAWWLGFLVSGLFSIISSIPFFFLP). Over 281-331 (KNPNKPQKERKISLSLHVLKTNDDRNQTANLTNQGKNVTKNVTGFFQSLKS) the chain is Cytoplasmic. Residues Ser293 and Ser295 each carry the phosphoserine modification. The chain crosses the membrane as a helical span at residues 332–353 (ILTNPLYVIFLLLTLLQVSSFI). Residues 354–373 (GSFTYVFKYMEQQYGQSASH) are Extracellular-facing. Residues 374–397 (ANFLLGIITIPTVATGMFLGGFII) form a helical membrane-spanning segment. The Cytoplasmic segment spans residues 398–401 (KKFK). The chain crosses the membrane as a helical span at residues 402–425 (LSLVGIAKFSFLTSMISFLFQLLY). Residues 426–537 (FPLICESKSV…NTCTRKFFIY (112 aa)) lie on the Extracellular side of the membrane. Asn445 carries an N-linked (GlcNAc...) asparagine glycan. The 56-residue stretch at 453 to 508 (DVPLSYCNSECNCDESQWEPVCGNNGITYLSPCLAGCKSSSGIKKHTVFYNCSCVE) folds into the Kazal-like domain. 3 cysteine pairs are disulfide-bonded: Cys459–Cys489, Cys465–Cys485, and Cys474–Cys506. N-linked (GlcNAc...) asparagine glycosylation is found at Asn503 and Asn516. Residues 538-560 (VAIQVINSLFSATGGTTFILLTV) form a helical membrane-spanning segment. At 561-569 (KIVQPELKA) the chain is on the cytoplasmic side. The helical transmembrane segment at 570–595 (LAMGFQSMVIRTLGGILAPIYFGALI) threads the bilayer. The Extracellular segment spans residues 596 to 629 (DKTCMKWSTNSCGAQGACRIYNSVFFGRVYLGLS). A helical transmembrane segment spans residues 630–647 (IALRFPALVLYIVFIFAM). Residues 648–695 (KKKFQGKDTKASDNERKVMDEANLEFLNNGEHFVPSAGTDSKTCNLDM) are Cytoplasmic-facing. Residue Ser683 is modified to Phosphoserine.

It belongs to the organo anion transporter (TC 2.A.60) family. Post-translationally, N-glycosylated. As to expression, highly expressed in liver, in particular at the basolateral membrane of hepatocytes near the central vein. Expressed in the placenta. In testis, primarily localized to the basal membrane of Sertoli cells and weakly expressed in Leydig cells and within the tubules.

The protein localises to the basolateral cell membrane. The protein resides in the basal cell membrane. It carries out the reaction estrone 3-sulfate(out) + hydrogencarbonate(in) = estrone 3-sulfate(in) + hydrogencarbonate(out). It catalyses the reaction 17beta-estradiol 17-O-(beta-D-glucuronate)(out) = 17beta-estradiol 17-O-(beta-D-glucuronate)(in). The enzyme catalyses taurocholate(out) = taurocholate(in). The catalysed reaction is estrone 3-sulfate(out) = estrone 3-sulfate(in). It carries out the reaction dehydroepiandrosterone 3-sulfate(out) = dehydroepiandrosterone 3-sulfate(in). It catalyses the reaction leukotriene C4(out) = leukotriene C4(in). The enzyme catalyses L-thyroxine(out) = L-thyroxine(in). The catalysed reaction is prostaglandin E2(out) = prostaglandin E2(in). It carries out the reaction (4E,15E)-bilirubin IXalpha C8-beta-D-glucuronoside(out) = (4E,15E)-bilirubin IXalpha C8-beta-D-glucuronoside(in). It catalyses the reaction bilirubin IXalpha bis-beta-D-glucuronoside(out) = bilirubin IXalpha bis-beta-D-glucuronoside(in). Its function is as follows. Mediates the Na(+)-independent uptake of organic anions. Shows broad substrate specificity, can transport both organic anions such as bile acid taurocholate (cholyltaurine) and conjugated steroids (17-beta-glucuronosyl estradiol, dehydroepiandrosterone sulfate (DHEAS), and estrone 3-sulfate), as well as eicosanoid leukotriene C4, prostaglandin E2 and L-thyroxine (T4). Hydrogencarbonate/HCO3(-) acts as the probable counteranion that exchanges for organic anions. Shows a pH-sensitive substrate specificity towards sulfated steroids, taurocholate and T4 which may be ascribed to the protonation state of the binding site and leads to a stimulation of substrate transport in an acidic microenvironment. Involved in the clearance of bile acids and organic anions from the liver. Can take up bilirubin glucuronides from plasma into the liver, contributing to the detoxification-enhancing liver-blood shuttling loop. Transports coproporphyrin I and III, by-products of heme synthesis, and may be involved in their hepatic disposition. May contribute to regulate the transport of organic compounds in testes across the blood-testis-barrier. Can transport HMG-CoA reductase inhibitors (also known as statins) such as pitavastatin, a clinically important class of hypolipidemic drugs. May play an important role in plasma and tissue distribution of the structurally diverse chemotherapeutic drugs methotrexate and paclitaxel. May also transport antihypertension agents, such as the angiotensin-converting enzyme (ACE) inhibitor prodrug enalapril, and the highly selective angiotensin II AT1-receptor antagonist valsartan, in the liver. The sequence is that of Solute carrier organic anion transporter family member 1B3 (SLCO1B3) from Homo sapiens (Human).